Reading from the N-terminus, the 23-residue chain is Glutamine synthetase (23 aa).

This sequence belongs to the glutamine synthetase family. As to quaternary structure, oligomer of 12 subunits arranged in the form of two hexagons. Mg(2+) serves as cofactor.

Its subcellular location is the cytoplasm. The enzyme catalyses L-glutamate + NH4(+) + ATP = L-glutamine + ADP + phosphate + H(+). With respect to regulation, the activity of this enzyme could be controlled by adenylation under conditions of abundant glutamine. Its function is as follows. Involved in nitrogen metabolism via ammonium assimilation. Catalyzes the ATP-dependent biosynthesis of glutamine from glutamate and ammonia. In Phormidium lapideum, this protein is Glutamine synthetase.